An 862-amino-acid chain; its full sequence is Linoleate 9S-lipoxygenase 1 (862 aa).

The region spanning 34 to 161 is the PLAT domain; it reads NDFGATIIDG…NYRYSRVFFA (128 aa). The Lipoxygenase domain occupies 164-862; it reads TYLPSQMPAA…AKGIPNSISI (699 aa). A disordered region spans residues 212-241; sequence GRPILGGNSDHPYPRRGRTERKPNASDPSL. Fe cation-binding residues include H517, H522, H708, N712, and I862.

This sequence belongs to the lipoxygenase family. Monomer. The cofactor is Fe cation.

It catalyses the reaction (9Z,12Z)-octadecadienoate + O2 = (9S)-hydroperoxy-(10E,12Z)-octadecadienoate. Its pathway is lipid metabolism; oxylipin biosynthesis. Its function is as follows. Plant lipoxygenase may be involved in a number of diverse aspects of plant physiology including growth and development, pest resistance, and senescence or responses to wounding. It catalyzes the hydroperoxidation of lipids containing a cis,cis-1,4-pentadiene structure. The protein is Linoleate 9S-lipoxygenase 1 (LOX1.1) of Hordeum vulgare (Barley).